Consider the following 170-residue polypeptide: Alpha-crystallin A chain (170 aa).

At M1 the chain carries N-acetylmethionine. The required for complex formation with BFSP1 and BFSP2 stretch occupies residues 1-63; the sequence is MDVTIQQPWF…RTALDSGISE (63 aa). Q6 carries the post-translational modification Deamidated glutamine; partial. Position 45 is a phosphoserine (S45). A Deamidated glutamine; partial modification is found at Q50. One can recognise a sHSP domain in the interval 52 to 161; it reads LFRTALDSGI…SERPIPVSRE (110 aa). N6-acetyllysine occurs at positions 70 and 99. Position 100 (H100) interacts with Zn(2+). N101 is modified (deamidated asparagine; partial). Residues E102, H107, and H151 each coordinate Zn(2+). The interval 144 to 170 is disordered; it reads PKIVDPSHSERPIPVSREEKPSSAPSS. Basic and acidic residues predominate over residues 148-164; the sequence is DPSHSERPIPVSREEKP. S159 carries an O-linked (GlcNAc) serine glycan.

The protein belongs to the small heat shock protein (HSP20) family. Heteromer composed of three CRYAA and one CRYAB subunits. Inter-subunit bridging via zinc ions enhances stability, which is crucial as there is no protein turn over in the lens. Can also form homodimers and homotetramers (dimers of dimers) which serve as the building blocks of homooligomers. Within homooligomers, the zinc-binding motif is created from residues of 3 different molecules. His-100 and Glu-102 from one molecule are ligands of the zinc ion, and His-107 and His-151 residues from additional molecules complete the site with tetrahedral coordination geometry. Part of a complex required for lens intermediate filament formation composed of BFSP1, BFSP2 and CRYAA. Acetylation at Lys-70 may increase chaperone activity. In terms of processing, undergoes age-dependent proteolytical cleavage at the C-terminus.

Its subcellular location is the cytoplasm. The protein localises to the nucleus. In terms of biological role, contributes to the transparency and refractive index of the lens. Acts as a chaperone, preventing aggregation of various proteins under a wide range of stress conditions. Required for the correct formation of lens intermediate filaments as part of a complex composed of BFSP1, BFSP2 and CRYAA. The polypeptide is Alpha-crystallin A chain (CRYAA) (Bradypus variegatus (Brown-throated three-fingered sloth)).